A 149-amino-acid chain; its full sequence is Large ribosomal subunit protein bL9 (149 aa).

It belongs to the bacterial ribosomal protein bL9 family.

In terms of biological role, binds to the 23S rRNA. The protein is Large ribosomal subunit protein bL9 of Rubrobacter xylanophilus (strain DSM 9941 / JCM 11954 / NBRC 16129 / PRD-1).